The primary structure comprises 326 residues: tRNA N6-adenosine threonylcarbamoyltransferase (326 aa).

His111 and His115 together coordinate Fe cation. Substrate-binding positions include 134 to 138 (TVSGG), Asp167, Gly180, Asp184, and Asn268. Asp293 lines the Fe cation pocket.

Belongs to the KAE1 / TsaD family. It depends on Fe(2+) as a cofactor.

The protein localises to the cytoplasm. The catalysed reaction is L-threonylcarbamoyladenylate + adenosine(37) in tRNA = N(6)-L-threonylcarbamoyladenosine(37) in tRNA + AMP + H(+). Required for the formation of a threonylcarbamoyl group on adenosine at position 37 (t(6)A37) in tRNAs that read codons beginning with adenine. Is involved in the transfer of the threonylcarbamoyl moiety of threonylcarbamoyl-AMP (TC-AMP) to the N6 group of A37, together with TsaE and TsaB. TsaD likely plays a direct catalytic role in this reaction. The polypeptide is tRNA N6-adenosine threonylcarbamoyltransferase (Dehalococcoides mccartyi (strain ATCC BAA-2100 / JCM 16839 / KCTC 5957 / BAV1)).